Consider the following 323-residue polypeptide: MKTTFLDFEQPIAELEAKIEELRFVQDDSAVDISEEISRLAGKSQQLTKDIYANLTPWQVAQIARHPQRPYTLDYVREIFTDFHELHGDRTFADDLSIVGGLARFNGQSCMVIGHQKGRDTKERAMRNFGMPKPEGYRKAKRLMELADKFGLPIFTFVDTPGAFPGIDAEERGQSEAIGHNLYVMAGLKVPLIATIIGEGGSGGALAIAVGDVVQMLQFATYAVISPEGCASILWKTAEKAPEAAEALGLTAHRLKALGLIDKIVSEPLGGAHRDVKGMAAMLKRSLAESLRQFQGVSVKELQARRYERLLAYGKFKETGAQE.

Residues 39–293 (RLAGKSQQLT…KRSLAESLRQ (255 aa)) form the CoA carboxyltransferase C-terminal domain.

This sequence belongs to the AccA family. Acetyl-CoA carboxylase is a heterohexamer composed of biotin carboxyl carrier protein (AccB), biotin carboxylase (AccC) and two subunits each of ACCase subunit alpha (AccA) and ACCase subunit beta (AccD).

The protein resides in the cytoplasm. The enzyme catalyses N(6)-carboxybiotinyl-L-lysyl-[protein] + acetyl-CoA = N(6)-biotinyl-L-lysyl-[protein] + malonyl-CoA. It functions in the pathway lipid metabolism; malonyl-CoA biosynthesis; malonyl-CoA from acetyl-CoA: step 1/1. Component of the acetyl coenzyme A carboxylase (ACC) complex. First, biotin carboxylase catalyzes the carboxylation of biotin on its carrier protein (BCCP) and then the CO(2) group is transferred by the carboxyltransferase to acetyl-CoA to form malonyl-CoA. In Cupriavidus pinatubonensis (strain JMP 134 / LMG 1197) (Cupriavidus necator (strain JMP 134)), this protein is Acetyl-coenzyme A carboxylase carboxyl transferase subunit alpha.